The chain runs to 120 residues: NAD(P)H-quinone oxidoreductase subunit 3 (120 aa).

3 consecutive transmembrane segments (helical) span residues 6–26 (GYDAFLGFLLIAAAVPVLALV), 64–84 (MFALVFVIFDVETVFLYPWAV), and 89–109 (LGLLAFIEALIFIAILVVALA).

This sequence belongs to the complex I subunit 3 family. As to quaternary structure, NDH-1 can be composed of about 15 different subunits; different subcomplexes with different compositions have been identified which probably have different functions.

It localises to the cellular thylakoid membrane. The catalysed reaction is a plastoquinone + NADH + (n+1) H(+)(in) = a plastoquinol + NAD(+) + n H(+)(out). The enzyme catalyses a plastoquinone + NADPH + (n+1) H(+)(in) = a plastoquinol + NADP(+) + n H(+)(out). Its function is as follows. NDH-1 shuttles electrons from an unknown electron donor, via FMN and iron-sulfur (Fe-S) centers, to quinones in the respiratory and/or the photosynthetic chain. The immediate electron acceptor for the enzyme in this species is believed to be plastoquinone. Couples the redox reaction to proton translocation, and thus conserves the redox energy in a proton gradient. Cyanobacterial NDH-1 also plays a role in inorganic carbon-concentration. This chain is NAD(P)H-quinone oxidoreductase subunit 3, found in Synechococcus sp. (strain WH7803).